A 207-amino-acid chain; its full sequence is Large ribosomal subunit protein uL4 (207 aa).

A disordered region spans residues 50 to 76 (AVKNRSAVSGGGRKPWKQKGTGRARQG).

The protein belongs to the universal ribosomal protein uL4 family. In terms of assembly, part of the 50S ribosomal subunit.

Functionally, one of the primary rRNA binding proteins, this protein initially binds near the 5'-end of the 23S rRNA. It is important during the early stages of 50S assembly. It makes multiple contacts with different domains of the 23S rRNA in the assembled 50S subunit and ribosome. Forms part of the polypeptide exit tunnel. This chain is Large ribosomal subunit protein uL4, found in Staphylococcus aureus (strain MRSA252).